Consider the following 87-residue polypeptide: Small ribosomal subunit protein bS20 (87 aa).

Belongs to the bacterial ribosomal protein bS20 family.

Binds directly to 16S ribosomal RNA. The chain is Small ribosomal subunit protein bS20 from Mycoplasma pneumoniae (strain ATCC 29342 / M129 / Subtype 1) (Mycoplasmoides pneumoniae).